The chain runs to 474 residues: Sugar transporter ERD6-like 17 (474 aa).

Transmembrane regions (helical) follow at residues 27–47 (ITACVILSTFVAVCGSFSFGV), 76–96 (FATLGAAIGALFCGNLAMVIG), 106–126 (FLCITGWLSIAFAKEVVLLNF), 129–149 (IISGIGFGLTSYVVPVYIAEI), 159–180 (TFSNQLLQNAGLAMIYFCGNFI), 184–204 (TLALLGALPCFIQVIGLFFVP), 266–286 (TLVVGIGLMLIQQFSGSAAVI), 302–322 (IGTTMLGIFVIPKAMIGLILV), 329–349 (PLLMTSAFGMSMTCMLLGVAF), 363–383 (ILSFICVMMYIATYAIGLGGL), 403–423 (IVTLVSFSSSSIVTYAFNFLF), and 429–449 (GTFFIFAGIGGAALLFIWLLV).

This sequence belongs to the major facilitator superfamily. Sugar transporter (TC 2.A.1.1) family. As to expression, expressed in young seedlings.

It is found in the membrane. Functionally, sugar transporter. This is Sugar transporter ERD6-like 17 from Arabidopsis thaliana (Mouse-ear cress).